Consider the following 158-residue polypeptide: 18.2 kDa class I heat shock protein (158 aa).

Positions 44–158 (ENSAFVSTRV…PEVKTIDISG (115 aa)) constitute a sHSP domain.

Belongs to the small heat shock protein (HSP20) family. Forms oligomeric structures.

The protein localises to the cytoplasm. This Medicago sativa (Alfalfa) protein is 18.2 kDa class I heat shock protein (HSP18.2).